The primary structure comprises 186 residues: Peptide deformylase (186 aa).

Cysteine 113 and histidine 156 together coordinate Fe cation. Residue glutamate 157 is part of the active site. Histidine 160 contacts Fe cation.

This sequence belongs to the polypeptide deformylase family. It depends on Fe(2+) as a cofactor.

It carries out the reaction N-terminal N-formyl-L-methionyl-[peptide] + H2O = N-terminal L-methionyl-[peptide] + formate. Functionally, removes the formyl group from the N-terminal Met of newly synthesized proteins. Requires at least a dipeptide for an efficient rate of reaction. N-terminal L-methionine is a prerequisite for activity but the enzyme has broad specificity at other positions. In Ligilactobacillus salivarius (strain UCC118) (Lactobacillus salivarius), this protein is Peptide deformylase.